We begin with the raw amino-acid sequence, 845 residues long: MNSSSASITYASRKRRKPVQKTVKPVPAEGIKSNPSKRHRDRLNTELDRLASLLPFPQDVVNKLDKLSVLRLSVSYLRAKSFFDVALKSTPADRNGVQDNCRTKFREGLNLQEGEFLLQALNGFVLVVTTDALVFYASSTIQDYLGFQQSDVIHQSVYELIHTEDRAEFQRQLHWALNPSQCPDSGQKMDEANGLSQPAVYYNPDQVPPENSSSMERCFVCRLRCLLDNSSGFLAMNFQGRLKYLHGQNKKGKDGSILPPQLALFAIATPLQPPSILEIRTKNFIFRTKHKLDFTPTGCDAKGRIVLGYTEAELCMRGSGYQFIHAADMLYCAEYHIRMIKTGESGLIVFRLLTKDNRWTWVQSNARLVYKNGRPDYIIATQRPLTDEEGTEHLRKRNLKLPFMFTTGEAVLYEVTNPFPPIMDPLPIRTKNGAGGKDSATKSTLSKDFLNPSSLLNAMMQQDESIYLYPASSSTPFERNFFSDSQNECSNWQNNVAPMGSDDILKHEQIGQSQEMNPTLSGDHAGLFPDNRNSDLYSIMKHLGIDFEDIKHMQQNEEFFRTDFSGEDDFRDIDLTDEILTYVEDSLNKSALGCSGYHPQQSMALNPSCMVQEHLQLEQQEQRQQHQKHRAVEQQQLCQKMQHMQVNGMFANWSSNQSGPFNCPQPDLQQYDVFSDVPGTSQEFPYKSEIDTMPYAQNFIPCSQSVLPPHSKGTQLDFPIGDFEPAPYPTTSSNLEDFVTCLQVPQSQRHGLNPQSAIVTPQTCYTGAVSMYQCQPEAQHSHVAQMQYNPTVPGPQAFLNKFQNGGVLNETYPAELNSINNTQPTTHLHPSEARPFSDLTSSGFL.

A propeptide spanning residues 1-10 is cleaved from the precursor; sequence MNSSSASITY. Residues 1-10 show a composition bias toward polar residues; the sequence is MNSSSASITY. The segment at 1-39 is disordered; that stretch reads MNSSSASITYASRKRRKPVQKTVKPVPAEGIKSNPSKRH. 2 consecutive short sequence motifs (nuclear localization signal) follow at residues 13–16 and 37–42; these read RKRR and KRHRDR. The region spanning 27-80 is the bHLH domain; it reads PAEGIKSNPSKRHRDRLNTELDRLASLLPFPQDVVNKLDKLSVLRLSVSYLRAK. 3 required for maintaining the overall integrity of the AHR:ARNT heterodimer and its transcriptional activity regions span residues 50 to 82, 117 to 125, and 265 to 267; these read LASLLPFPQDVVNKLDKLSVLRLSVSYLRAKSF, LLQALNGFV, and FAI. The short motif at 64–72 is the Nuclear export signal element; that stretch reads LDKLSVLRL. The 71-residue stretch at 110–180 folds into the PAS 1 domain; the sequence is NLQEGEFLLQ…RQLHWALNPS (71 aa). Positions 274 to 341 constitute a PAS 2 domain; that stretch reads PSILEIRTKN…CAEYHIRMIK (68 aa). The PAC domain maps to 347 to 385; sequence LIVFRLLTKDNRWTWVQSNARLVYKNGRPDYIIATQRPL. A disordered region spans residues 820 to 845; that stretch reads NNTQPTTHLHPSEARPFSDLTSSGFL.

In terms of assembly, homodimer. Heterodimer; efficient DNA binding requires dimerization with another bHLH protein. Interacts with ARNT; the heterodimer ARNT:AHR binds to core DNA sequence 5'-TGCGTG-3' within the dioxin response element (DRE) of target gene promoters and activates their transcription. Binds MYBBP1A. Interacts with coactivators including SRC-1, RIP140 and NOCA7, and with the corepressor SMRT. Interacts with NEDD8 and IVNS1ABP. Interacts with BMAL1. Interacts with HSP90AB1. Interacts with TIPARP; leading to mono-ADP-ribosylation of AHR and subsequent inhibition of AHR. In terms of processing, mono-ADP-ribosylated, leading to inhibit transcription activator activity of AHR.

The protein localises to the cytoplasm. It is found in the nucleus. Functionally, ligand-activated transcription factor that enables cells to adapt to changing conditions by sensing compounds from the environment, diet, microbiome and cellular metabolism, and which plays important roles in development, immunity and cancer. Upon ligand binding, translocates into the nucleus, where it heterodimerizes with ARNT and induces transcription by binding to xenobiotic response elements (XRE). Regulates a variety of biological processes, including angiogenesis, hematopoiesis, drug and lipid metabolism, cell motility and immune modulation. Xenobiotics can act as ligands: upon xenobiotic-binding, activates the expression of multiple phase I and II xenobiotic chemical metabolizing enzyme genes (such as the CYP1A1 gene). Mediates biochemical and toxic effects of halogenated aromatic hydrocarbons. Next to xenobiotics, natural ligands derived from plants, microbiota, and endogenous metabolism are potent AHR agonists. Tryptophan (Trp) derivatives constitute an important class of endogenous AHR ligands. Acts as a negative regulator of anti-tumor immunity: indoles and kynurenic acid generated by Trp catabolism act as ligand and activate AHR, thereby promoting AHR-driven cancer cell motility and suppressing adaptive immunity. Regulates the circadian clock by inhibiting the basal and circadian expression of the core circadian component PER1. Inhibits PER1 by repressing the CLOCK-BMAL1 heterodimer mediated transcriptional activation of PER1. The heterodimer ARNT:AHR binds to core DNA sequence 5'-TGCGTG-3' within the dioxin response element (DRE) of target gene promoters and activates their transcription. The sequence is that of Aryl hydrocarbon receptor (AHR) from Delphinapterus leucas (Beluga whale).